The primary structure comprises 334 residues: tRNA N6-adenosine threonylcarbamoyltransferase (334 aa).

Positions 110 and 114 each coordinate Fe cation. Residues 133–137 (IVSGG), aspartate 166, glycine 179, aspartate 183, and asparagine 275 contribute to the substrate site. Fe cation is bound at residue aspartate 303.

The protein belongs to the KAE1 / TsaD family. Fe(2+) is required as a cofactor.

The protein resides in the cytoplasm. The catalysed reaction is L-threonylcarbamoyladenylate + adenosine(37) in tRNA = N(6)-L-threonylcarbamoyladenosine(37) in tRNA + AMP + H(+). Its function is as follows. Required for the formation of a threonylcarbamoyl group on adenosine at position 37 (t(6)A37) in tRNAs that read codons beginning with adenine. Is involved in the transfer of the threonylcarbamoyl moiety of threonylcarbamoyl-AMP (TC-AMP) to the N6 group of A37, together with TsaE and TsaB. TsaD likely plays a direct catalytic role in this reaction. The polypeptide is tRNA N6-adenosine threonylcarbamoyltransferase (Salinibacter ruber (strain DSM 13855 / M31)).